The following is a 166-amino-acid chain: Heavy metal-associated isoprenylated plant protein 45 (166 aa).

One can recognise an HMA domain in the interval 15–78 (LSIVELLVDM…MVKRTGRTAE (64 aa)). C26 and C29 together coordinate a metal cation. Residue C163 is modified to Cysteine methyl ester. Residue C163 is the site of S-farnesyl cysteine attachment. The propeptide at 164 to 166 (TIM) is removed in mature form.

The protein belongs to the HIPP family.

Functionally, heavy-metal-binding protein. The polypeptide is Heavy metal-associated isoprenylated plant protein 45 (Arabidopsis thaliana (Mouse-ear cress)).